A 423-amino-acid chain; its full sequence is Histidine--tRNA ligase (423 aa).

This sequence belongs to the class-II aminoacyl-tRNA synthetase family. Homodimer.

The protein resides in the cytoplasm. It catalyses the reaction tRNA(His) + L-histidine + ATP = L-histidyl-tRNA(His) + AMP + diphosphate + H(+). The protein is Histidine--tRNA ligase of Halorhodospira halophila (strain DSM 244 / SL1) (Ectothiorhodospira halophila (strain DSM 244 / SL1)).